The following is a 125-amino-acid chain: Prefoldin subunit beta (125 aa).

It belongs to the prefoldin subunit beta family. As to quaternary structure, heterohexamer of two alpha and four beta subunits.

Its subcellular location is the cytoplasm. Its function is as follows. Molecular chaperone capable of stabilizing a range of proteins. Seems to fulfill an ATP-independent, HSP70-like function in archaeal de novo protein folding. This Halobacterium salinarum (strain ATCC 29341 / DSM 671 / R1) protein is Prefoldin subunit beta.